Consider the following 95-residue polypeptide: Protein TusB (95 aa).

It belongs to the DsrH/TusB family. In terms of assembly, heterohexamer, formed by a dimer of trimers. The hexameric TusBCD complex contains 2 copies each of TusB, TusC and TusD. The TusBCD complex interacts with TusE.

Its subcellular location is the cytoplasm. In terms of biological role, part of a sulfur-relay system required for 2-thiolation of 5-methylaminomethyl-2-thiouridine (mnm(5)s(2)U) at tRNA wobble positions. In Salmonella agona (strain SL483), this protein is Protein TusB.